We begin with the raw amino-acid sequence, 171 residues long: Inosine/xanthosine triphosphatase (171 aa).

Residue 8 to 13 coordinates substrate; sequence TTNPAK. Residues Glu-38 and Gln-68 each contribute to the Mg(2+) site.

It belongs to the YjjX NTPase family. As to quaternary structure, homodimer. It depends on Mg(2+) as a cofactor. Mn(2+) serves as cofactor.

It catalyses the reaction XTP + H2O = XDP + phosphate + H(+). The catalysed reaction is ITP + H2O = IDP + phosphate + H(+). Its function is as follows. Phosphatase that hydrolyzes non-canonical purine nucleotides such as XTP and ITP to their respective diphosphate derivatives. Probably excludes non-canonical purines from DNA/RNA precursor pool, thus preventing their incorporation into DNA/RNA and avoiding chromosomal lesions. The protein is Inosine/xanthosine triphosphatase of Citrobacter koseri (strain ATCC BAA-895 / CDC 4225-83 / SGSC4696).